The following is a 411-amino-acid chain: Serine hydroxymethyltransferase (411 aa).

Position 120-122 (Gly120–Leu122) interacts with (6S)-5,6,7,8-tetrahydrofolate. N6-(pyridoxal phosphate)lysine is present on Lys225. Ser350–Phe352 serves as a coordination point for (6S)-5,6,7,8-tetrahydrofolate.

Belongs to the SHMT family. In terms of assembly, homodimer. It depends on pyridoxal 5'-phosphate as a cofactor.

It is found in the cytoplasm. The enzyme catalyses (6R)-5,10-methylene-5,6,7,8-tetrahydrofolate + glycine + H2O = (6S)-5,6,7,8-tetrahydrofolate + L-serine. Its pathway is one-carbon metabolism; tetrahydrofolate interconversion. The protein operates within amino-acid biosynthesis; glycine biosynthesis; glycine from L-serine: step 1/1. In terms of biological role, catalyzes the reversible interconversion of serine and glycine with tetrahydrofolate (THF) serving as the one-carbon carrier. This reaction serves as the major source of one-carbon groups required for the biosynthesis of purines, thymidylate, methionine, and other important biomolecules. Also exhibits THF-independent aldolase activity toward beta-hydroxyamino acids, producing glycine and aldehydes, via a retro-aldol mechanism. This chain is Serine hydroxymethyltransferase, found in Lactobacillus gasseri (strain ATCC 33323 / DSM 20243 / BCRC 14619 / CIP 102991 / JCM 1131 / KCTC 3163 / NCIMB 11718 / NCTC 13722 / AM63).